Here is a 552-residue protein sequence, read N- to C-terminus: Hydroxylamine reductase (552 aa).

[2Fe-2S] cluster-binding residues include C3, C6, C18, and C25. 8 residues coordinate hybrid [4Fe-2O-2S] cluster: H250, E274, C318, C406, C434, C459, E493, and K495. The residue at position 406 (C406) is a Cysteine persulfide.

It belongs to the HCP family. [2Fe-2S] cluster is required as a cofactor. Requires hybrid [4Fe-2O-2S] cluster as cofactor.

Its subcellular location is the cytoplasm. It carries out the reaction A + NH4(+) + H2O = hydroxylamine + AH2 + H(+). Catalyzes the reduction of hydroxylamine to form NH(3) and H(2)O. This chain is Hydroxylamine reductase, found in Shewanella woodyi (strain ATCC 51908 / MS32).